We begin with the raw amino-acid sequence, 277 residues long: Putative pyruvate, phosphate dikinase regulatory protein (277 aa).

156 to 163 provides a ligand contact to ADP; sequence GVSRTSKT.

Belongs to the pyruvate, phosphate/water dikinase regulatory protein family. PDRP subfamily.

The catalysed reaction is N(tele)-phospho-L-histidyl/L-threonyl-[pyruvate, phosphate dikinase] + ADP = N(tele)-phospho-L-histidyl/O-phospho-L-threonyl-[pyruvate, phosphate dikinase] + AMP + H(+). It carries out the reaction N(tele)-phospho-L-histidyl/O-phospho-L-threonyl-[pyruvate, phosphate dikinase] + phosphate + H(+) = N(tele)-phospho-L-histidyl/L-threonyl-[pyruvate, phosphate dikinase] + diphosphate. Its function is as follows. Bifunctional serine/threonine kinase and phosphorylase involved in the regulation of the pyruvate, phosphate dikinase (PPDK) by catalyzing its phosphorylation/dephosphorylation. The chain is Putative pyruvate, phosphate dikinase regulatory protein from Carboxydothermus hydrogenoformans (strain ATCC BAA-161 / DSM 6008 / Z-2901).